We begin with the raw amino-acid sequence, 422 residues long: Structural polyprotein (422 aa).

At 1 to 359 the chain is on the extracellular side; the sequence is SVTEHFNVYK…WPHEIIQYYY (359 aa). Residues asparagine 200 and asparagine 262 are each glycosylated (N-linked (GlcNAc...) asparagine; by host). The chain crosses the membrane as a helical span at residues 360 to 382; it reads GLYPAATIAAVSGXSLMALLTLA. Residues 383–422 are Cytoplasmic-facing; the sequence is ATCCMLATARRKCLTPYALTPGAVVPLTLGLXXCAPRANA. 3 S-palmitoyl cysteine; by host lipidation sites follow: cysteine 385, cysteine 395, and cysteine 416. The interval 395–415 is transient transmembrane before p62-6K protein processing; the sequence is CLTPYALTPGAVVPLTLGLXX.

Spike glycoprotein E2: Processing of the precursor of protein E3/E2 into E2 and E3 results in a heterodimer of the spike glycoproteins E2 and E1. Spike glycoprotein E2: Spike at virion surface are constituted of three E2-E1 heterodimers. Spike glycoprotein E2: Interacts with 6K protein. Post-translationally, structural polyprotein: Specific enzymatic cleavages in vivo yield mature proteins. Capsid protein is auto-cleaved during polyprotein translation, unmasking a signal peptide at the N-terminus of the precursor of E3/E2. The remaining polyprotein is then targeted to the host endoplasmic reticulum, where host signal peptidase cleaves it into pE2, 6K and E1 proteins. pE2 is further processed to mature E3 and E2 by host furin in trans-Golgi vesicle. In terms of processing, spike glycoprotein E2: Palmitoylated via thioester bonds. These palmitoylations may induce disruption of the C-terminus transmembrane. This would result in the reorientation of E2 C-terminus from lumenal to cytoplasmic side. Spike glycoprotein E2: N-glycosylated.

The protein localises to the virion membrane. Its subcellular location is the host cell membrane. Functionally, spike glycoprotein E2: Plays a role in viral attachment to target host cell, by binding to the cell receptor. Synthesized as a p62 precursor which is processed by furin at the cell membrane just before virion budding, giving rise to E2-E1 heterodimer. The p62-E1 heterodimer is stable, whereas E2-E1 is unstable and dissociate at low pH. p62 is processed at the last step, presumably to avoid E1 fusion activation before its final export to cell surface. E2 C-terminus contains a transitory transmembrane that would be disrupted by palmitoylation, resulting in reorientation of the C-terminal tail from lumenal to cytoplasmic side. This step is critical since E2 C-terminus is involved in budding by interacting with capsid proteins. This release of E2 C-terminus in cytoplasm occurs lately in protein export, and precludes premature assembly of particles at the endoplasmic reticulum membrane. This chain is Structural polyprotein, found in Ross river virus (strain 213970) (RRV).